The sequence spans 319 residues: Large ribosomal subunit protein uL10 (319 aa).

The interval 289 to 319 is disordered; the sequence is EQKSAAPAAKEEAPKEDSEESDEDMGFGLFD.

It belongs to the universal ribosomal protein uL10 family. In terms of assembly, P0 forms a pentameric complex by interaction with dimers of P1 and P2. Phosphorylated.

The protein localises to the nucleus. It localises to the cytoplasm. Ribosomal protein P0 is the functional equivalent of E.coli protein L10. The chain is Large ribosomal subunit protein uL10 (rplp0) from Danio rerio (Zebrafish).